The chain runs to 185 residues: Elongation factor P (185 aa).

Belongs to the elongation factor P family.

It localises to the cytoplasm. Its pathway is protein biosynthesis; polypeptide chain elongation. Involved in peptide bond synthesis. Stimulates efficient translation and peptide-bond synthesis on native or reconstituted 70S ribosomes in vitro. Probably functions indirectly by altering the affinity of the ribosome for aminoacyl-tRNA, thus increasing their reactivity as acceptors for peptidyl transferase. The protein is Elongation factor P of Burkholderia mallei (strain NCTC 10247).